The following is a 416-amino-acid chain: Proline-serine-threonine phosphatase-interacting protein 1 (416 aa).

The region spanning 5–264 (LQFKDAFWCR…TLEGCSIDAD (260 aa)) is the F-BAR domain. The stretch at 166–212 (HQKQVEKSQNKARQCKDSATEAERVYRQSIAQLEKVRAEWEQEHRTT) forms a coiled coil. Position 318 is a phosphoserine (Ser-318). At Tyr-345 the chain carries Phosphotyrosine. An SH3 domain is found at 359–416 (SPAQEYRALYDYTAQNPDELDLSAGDILEVILEGEDGWWTVERNGQRGFVPGSYLEKL).

Homodimer. Homotrimer. Interacts (via coiled-coil domain) with CD2AP, PTPN12 and PTPN18. Interacts (via SH3 domain) with ABL1 and WAS. Interacts (via SH3 and coiled-coil domains) with MEFV (via B-box zinc finger); the interaction allows binding of MEFV to PYCARD and facilitates formation of PYCARD pyroptosomes. Interacts with CD2, DNM2 and FASLG. Dephosphorylated on Tyr-345 by PTPN18, this event negatively regulates the association of PSTPIP1 with SH2 domain-containing proteins as tyrosine kinase. Phosphorylation of Tyr-345 is probably required for subsequent phosphorylation at other tyrosine residues. Phosphorylation is induced by activation of the EGFR and PDGFR in a ABL1 dependent manner. The phosphorylation regulates the interaction with WAS and with MEFV. As to expression, highly expressed in the peripheral blood leukocytes, granulocytes and monocytes, namely in T-cells and natural killer cells, and in spleen. Weakly expressed in the thymus, small intestine, lung and placenta.

The protein resides in the cytoplasm. Its subcellular location is the cell membrane. The protein localises to the cell projection. It localises to the uropodium. It is found in the cytoskeleton. The protein resides in the perinuclear region. Its subcellular location is the lamellipodium. The protein localises to the cleavage furrow. Its function is as follows. Involved in regulation of the actin cytoskeleton. May regulate WAS actin-bundling activity. Bridges the interaction between ABL1 and PTPN18 leading to ABL1 dephosphorylation. May play a role as a scaffold protein between PTPN12 and WAS and allow PTPN12 to dephosphorylate WAS. Has the potential to physically couple CD2 and CD2AP to WAS. Acts downstream of CD2 and CD2AP to recruit WAS to the T-cell:APC contact site so as to promote the actin polymerization required for synapse induction during T-cell activation. Down-regulates CD2-stimulated adhesion through the coupling of PTPN12 to CD2. Also has a role in innate immunity and the inflammatory response. Recruited to inflammasomes by MEFV. Induces formation of pyroptosomes, large supramolecular structures composed of oligomerized PYCARD dimers which form prior to inflammatory apoptosis. Binding to MEFV allows MEFV to bind to PYCARD and facilitates pyroptosome formation. Regulates endocytosis and cell migration in neutrophils. This is Proline-serine-threonine phosphatase-interacting protein 1 (PSTPIP1) from Homo sapiens (Human).